The chain runs to 379 residues: Programmed cell death protein 2-like (379 aa).

This chain is Programmed cell death protein 2-like (PDCD2L), found in Gallus gallus (Chicken).